The primary structure comprises 1055 residues: Endo-1,4-beta-xylanase A (1055 aa).

The N-terminal stretch at 1–29 (MRKKRRGFLNASTAVLVGILAGFLGVVLA) is a signal peptide. An a region spans residues 30 to 357 (ATGALGFAVR…TTSAEIKLEM (328 aa)). One can recognise a GH10 domain in the interval 360–688 (EEEIPALKDV…KLAYWAIVAP (329 aa)). The active-site Proton donor is Glu-498. Glu-604 (nucleophile) is an active-site residue. 2 consecutive CBM-cenC domains span residues 720-851 (PIEI…TNSQ) and 895-1040 (KSVA…PTNN).

The protein belongs to the glycosyl hydrolase 10 (cellulase F) family.

The enzyme catalyses Endohydrolysis of (1-&gt;4)-beta-D-xylosidic linkages in xylans.. The protein is Endo-1,4-beta-xylanase A (xynA) of Thermotoga neapolitana.